A 141-amino-acid polypeptide reads, in one-letter code: Large ribosomal subunit protein uL11 (141 aa).

This sequence belongs to the universal ribosomal protein uL11 family. In terms of assembly, part of the ribosomal stalk of the 50S ribosomal subunit. Interacts with L10 and the large rRNA to form the base of the stalk. L10 forms an elongated spine to which L12 dimers bind in a sequential fashion forming a multimeric L10(L12)X complex. In terms of processing, one or more lysine residues are methylated.

Its function is as follows. Forms part of the ribosomal stalk which helps the ribosome interact with GTP-bound translation factors. The sequence is that of Large ribosomal subunit protein uL11 from Ruegeria sp. (strain TM1040) (Silicibacter sp.).